The following is a 63-amino-acid chain: Large ribosomal subunit protein bL32 (63 aa).

The span at 1–18 (MPVPKRKTSPSRRGKRRS) shows a compositional bias: basic residues. Residues 1–26 (MPVPKRKTSPSRRGKRRSHDGLRPEN) are disordered.

The protein belongs to the bacterial ribosomal protein bL32 family.

This is Large ribosomal subunit protein bL32 from Neorickettsia sennetsu (strain ATCC VR-367 / Miyayama) (Ehrlichia sennetsu).